Reading from the N-terminus, the 227-residue chain is DnaJ homolog subfamily B member 8 (227 aa).

Residues 3 to 69 (NYYEVLGVQS…KKRSVYDRAG (67 aa)) enclose the J domain.

Interacts with histone deacetylases HDAC4, HDAC6, and SIRT2, HDAC activity is required for antiaggregation.

In terms of biological role, efficient suppressor of aggregation and toxicity of disease-associated polyglutamine proteins. This is DnaJ homolog subfamily B member 8 (Dnajb8) from Mus musculus (Mouse).